Consider the following 342-residue polypeptide: DNA repair protein RAD51 homolog 1 (342 aa).

Positions M1–G24 are disordered. Residues T51–A80 enclose the HhH domain. The region spanning Q100–I314 is the FtsK domain. G130–T137 contributes to the ATP binding site.

The protein belongs to the RecA family. RAD51 subfamily. Self-associates and interacts with XRCC3. Binds to RAD54/CHR25. Interacts with BRCA2A and BRCA2B. Can form a tripartite complex with both BRCA2B and DSS1(I). As to expression, detected in various tissues. Higher expression in reproductive tissues than in vegetative tissues, with the highest expression level in young flower buds. At cellular level, is expressed at low levels in flower primordia, then at higher levels in young anthers and at highest levels in both females and males meiocytes. Not detected in gametophytes.

The protein localises to the nucleus. In terms of biological role, binds to single and double-stranded DNA and exhibits DNA-dependent ATPase activity. Unwinds duplex DNA. Component of the meiotic recombination pathway. Seems to play a role in mediating chromosome homology search, chromosome pairing and synapsis at early stages and probably chromosome crossing-over at later stages in meiosis. Probably is involved in the repair of meiotic double strand breaks (DBSs) generated by AtSPO11-1 and in homologous recombination. Its function is dispensable for vegetative growth and root mitosis. The chain is DNA repair protein RAD51 homolog 1 from Arabidopsis thaliana (Mouse-ear cress).